The chain runs to 494 residues: 3-octaprenyl-4-hydroxybenzoate carboxy-lyase (494 aa).

Residue Asn172 participates in Mn(2+) binding. Prenylated FMN contacts are provided by residues 175–177 (IYR), 189–191 (RWL), and 194–195 (RG). Glu238 provides a ligand contact to Mn(2+). The active-site Proton donor is Asp287.

This sequence belongs to the UbiD family. In terms of assembly, homohexamer. Requires prenylated FMN as cofactor. The cofactor is Mn(2+).

The protein resides in the cell membrane. The catalysed reaction is a 4-hydroxy-3-(all-trans-polyprenyl)benzoate + H(+) = a 2-(all-trans-polyprenyl)phenol + CO2. The protein operates within cofactor biosynthesis; ubiquinone biosynthesis. Catalyzes the decarboxylation of 3-octaprenyl-4-hydroxy benzoate to 2-octaprenylphenol, an intermediate step in ubiquinone biosynthesis. The polypeptide is 3-octaprenyl-4-hydroxybenzoate carboxy-lyase (Erwinia tasmaniensis (strain DSM 17950 / CFBP 7177 / CIP 109463 / NCPPB 4357 / Et1/99)).